The following is a 396-amino-acid chain: Elongation factor Tu (396 aa).

The tr-type G domain maps to 10–206; it reads KPHCNIGTIG…EVDAYIPQPE (197 aa). A G1 region spans residues 19 to 26; that stretch reads GHVDHGKT. 19–26 provides a ligand contact to GTP; that stretch reads GHVDHGKT. T26 contacts Mg(2+). Residues 60 to 64 are G2; it reads GITIS. Residues 81–84 form a G3 region; that stretch reads DCPG. Residues 81–85 and 136–139 contribute to the GTP site; these read DCPGH and NKCD. The interval 136 to 139 is G4; that stretch reads NKCD. Residues 174–176 are G5; sequence SAL.

This sequence belongs to the TRAFAC class translation factor GTPase superfamily. Classic translation factor GTPase family. EF-Tu/EF-1A subfamily. As to quaternary structure, monomer.

It localises to the cytoplasm. It catalyses the reaction GTP + H2O = GDP + phosphate + H(+). GTP hydrolase that promotes the GTP-dependent binding of aminoacyl-tRNA to the A-site of ribosomes during protein biosynthesis. This chain is Elongation factor Tu, found in Paramagnetospirillum magneticum (strain ATCC 700264 / AMB-1) (Magnetospirillum magneticum).